The chain runs to 150 residues: CCAAT/enhancer-binding protein gamma (150 aa).

A Glycyl lysine isopeptide (Lys-Gly) (interchain with G-Cter in SUMO2) cross-link involves residue K3. Residues 27–94 are disordered; that stretch reads GLQQVPQLVP…QKAQDTLQRV (68 aa). Residues 28–37 are compositionally biased toward low complexity; it reads LQQVPQLVPA. The segment covering 56–72 has biased composition (basic and acidic residues); it reads SPMDRNSDEYRQRRERN. Residues 62-125 form the bZIP domain; the sequence is SDEYRQRRER…SVLKDLFLEH (64 aa). Residues 66–93 form a basic motif region; that stretch reads RQRRERNNMAVKKSRLKSKQKAQDTLQR. The tract at residues 97-118 is leucine-zipper; it reads LKEENERLEAKIKLLTKELSVL.

It belongs to the bZIP family. C/EBP subfamily. Binds DNA as a dimer and can form stable heterodimers with CEBPA and CEBPB. Interacts with ZNF638; this interaction increases transcriptional activation.

It localises to the nucleus. In terms of biological role, transcription factor that binds to the promoter and the enhancer regions of target genes. Binds to the promoter and the enhancer of the alpha-1-fetoprotein gene. Binds to the enhancer element PRE-I (positive regulatory element-I) of the IL-4 gene. Binds to the promoter and the enhancer of the immunoglobulin heavy chain. Binds to GPE1, a cis-acting element in the G-CSF gene promoter. The protein is CCAAT/enhancer-binding protein gamma (Cebpg) of Rattus norvegicus (Rat).